The sequence spans 409 residues: uncharacterized protein (409 aa).

Residues 1–209 (MRVFVARQPI…GHDLSTHFYS (209 aa)) enclose the EAL domain. In terms of domain architecture, HDOD spans 203 to 392 (LSTHFYSYYE…GNQLDKEEAY (190 aa)).

This is an uncharacterized protein from Bacillus subtilis (strain 168).